The following is a 1170-amino-acid chain: Cellulose synthase-like protein D2 (1170 aa).

2 disordered regions span residues Met-1–Gly-75 and Asn-269–Ser-295. The span at Arg-10–Gly-24 shows a compositional bias: low complexity. Gly residues predominate over residues Asn-273–Gly-288. 2 helical membrane-spanning segments follow: residues Val-311–Ala-331 and Ala-341–Leu-361. Asp-441 is an active-site residue. Residues His-527 to Lys-551 are a coiled coil. Residue Asp-873 is part of the active site. 6 helical membrane-spanning segments follow: residues Ile-955 to Val-975, Thr-981 to Ile-1001, Leu-1027 to Leu-1047, Ser-1070 to Phe-1090, Leu-1104 to Gly-1124, and Thr-1134 to Ile-1154.

Belongs to the glycosyltransferase 2 family. Plant cellulose synthase-like D subfamily.

It is found in the golgi apparatus membrane. In terms of biological role, thought to be a Golgi-localized beta-glycan synthase that polymerize the backbones of noncellulosic polysaccharides (hemicelluloses) of plant cell wall. This Oryza sativa subsp. indica (Rice) protein is Cellulose synthase-like protein D2 (CSLD2).